A 345-amino-acid polypeptide reads, in one-letter code: Biotin synthase (345 aa).

Positions 38 to 256 constitute a Radical SAM core domain; that stretch reads RQVQVSTLLS…IAVARIMMPA (219 aa). [4Fe-4S] cluster is bound by residues cysteine 53, cysteine 57, and cysteine 60. Residues cysteine 97, cysteine 128, cysteine 188, and arginine 260 each contribute to the [2Fe-2S] cluster site.

This sequence belongs to the radical SAM superfamily. Biotin synthase family. As to quaternary structure, homodimer. Requires [4Fe-4S] cluster as cofactor. It depends on [2Fe-2S] cluster as a cofactor.

It carries out the reaction (4R,5S)-dethiobiotin + (sulfur carrier)-SH + 2 reduced [2Fe-2S]-[ferredoxin] + 2 S-adenosyl-L-methionine = (sulfur carrier)-H + biotin + 2 5'-deoxyadenosine + 2 L-methionine + 2 oxidized [2Fe-2S]-[ferredoxin]. It participates in cofactor biosynthesis; biotin biosynthesis; biotin from 7,8-diaminononanoate: step 2/2. Functionally, catalyzes the conversion of dethiobiotin (DTB) to biotin by the insertion of a sulfur atom into dethiobiotin via a radical-based mechanism. The polypeptide is Biotin synthase (Pectobacterium atrosepticum (strain SCRI 1043 / ATCC BAA-672) (Erwinia carotovora subsp. atroseptica)).